Consider the following 541-residue polypeptide: Formimidoyltransferase-cyclodeaminase (541 aa).

The formiminotransferase N-subdomain stretch occupies residues 1 to 181 (MAKLVECVPN…GATVTGARTF (181 aa)). His82 (for formimidoyltransferase activity) is an active-site residue. 163-172 (GPPAFVPQWG) contacts folate. Residues 182–326 (LIAYNINLLC…PRERIIEYLV (145 aa)) are formiminotransferase C-subdomain. The segment at 327 to 334 (QAGQEDKG) is linker. The segment at 335–541 (LVTKPLGAFV…VLALLEKREA (207 aa)) is cyclodeaminase/cyclohydrolase. Asp412 (for cyclodeaminase activity) is an active-site residue.

This sequence in the C-terminal section; belongs to the cyclodeaminase/cyclohydrolase family. In the N-terminal section; belongs to the formiminotransferase family. As to quaternary structure, homooctamer, including four polyglutamate binding sites. The subunits are arranged as a tetramer of dimers, and form a planar ring-shaped structure.

The protein resides in the cytoplasm. It localises to the cytosol. Its subcellular location is the golgi apparatus. The protein localises to the cytoskeleton. It is found in the microtubule organizing center. The protein resides in the centrosome. It localises to the centriole. The catalysed reaction is 5-formimidoyltetrahydrofolate + L-glutamate = N-formimidoyl-L-glutamate + (6S)-5,6,7,8-tetrahydrofolate. It catalyses the reaction 5-formimidoyltetrahydrofolate + 2 H(+) = (6R)-5,10-methenyltetrahydrofolate + NH4(+). It participates in amino-acid degradation; L-histidine degradation into L-glutamate; L-glutamate from N-formimidoyl-L-glutamate (transferase route): step 1/1. Folate-dependent enzyme, that displays both transferase and deaminase activity. Serves to channel one-carbon units from formiminoglutamate to the folate pool. In terms of biological role, binds and promotes bundling of vimentin filaments originating from the Golgi. The protein is Formimidoyltransferase-cyclodeaminase (FTCD) of Gallus gallus (Chicken).